A 287-amino-acid polypeptide reads, in one-letter code: Inorganic pyrophosphatase (287 aa).

Arg79 provides a ligand contact to diphosphate. The Mg(2+) site is built by Asp116, Asp121, and Asp153.

The protein belongs to the PPase family. Requires Mg(2+) as cofactor.

The protein localises to the cytoplasm. The catalysed reaction is diphosphate + H2O = 2 phosphate + H(+). The polypeptide is Inorganic pyrophosphatase (IPP1) (Candida glabrata (strain ATCC 2001 / BCRC 20586 / JCM 3761 / NBRC 0622 / NRRL Y-65 / CBS 138) (Yeast)).